A 492-amino-acid polypeptide reads, in one-letter code: Cytochrome P450 monooxygenase MYCFIDRAFT_204672 (492 aa).

Asparagine 116 is a glycosylation site (N-linked (GlcNAc...) asparagine). A helical membrane pass occupies residues 269 to 293 (FLISMIFISAANGCVVSGAMLYSIA). Asparagine 335 carries N-linked (GlcNAc...) asparagine glycosylation. Heme is bound at residue cysteine 430.

The protein belongs to the cytochrome P450 family. Requires heme as cofactor.

It localises to the membrane. It functions in the pathway secondary metabolite biosynthesis. Functionally, cytochrome P450 monooxygenase; part of the gene cluster that mediates the biosynthesis of an emodin derivative that may be involved in black Sigatoka disease of banana. The pathway begins with the synthesis of atrochrysone thioester by the polyketide synthase PKS8-1. The atrochrysone carboxyl ACP thioesterase MYCFIDRAFT_190111 then breaks the thioester bond and releases the atrochrysone carboxylic acid from PKS8-1. The decarboxylase MYCFIDRAFT_34057 then catalyzes the concerted decarboxylation-elimination required to convert atochrysone carboxylic acid into emodin anthrone, which is further oxidized to emodin by the anthrone oxygenase MYCFIDRAFT_34418. The functions of the other tailoring enzymes as well as the final product of the cluster have still to be identified. In Pseudocercospora fijiensis (strain CIRAD86) (Black leaf streak disease fungus), this protein is Cytochrome P450 monooxygenase MYCFIDRAFT_204672.